We begin with the raw amino-acid sequence, 704 residues long: mRNA (2'-O-methyladenosine-N(6)-)-methyltransferase (704 aa).

Residues 1–33 (MANENHGSPREEASLLSHSPGTSNQSQPCSPKP) form a disordered region. Positions 16-29 (LSHSPGTSNQSQPC) are enriched in polar residues. Phosphoserine is present on Ser30. Positions 43–77 (ELVHAGWEKCWSRRENRPYYFNRFTNQSLWEMPVL) constitute a WW domain. The interval 88-151 (GLNATPLPQD…PSSPSIPGTP (64 aa)) is disordered. A Nuclear localization signal motif is present at residues 109–113 (KPRKR). Position 116 is a phosphoserine (Ser116). Positions 136-149 (PTGQSVPSSPSIPG) are enriched in polar residues. At Thr152 the chain carries Phosphothreonine. Substrate is bound by residues Arg235 and Arg265. Residue 553 to 556 (NPPF) participates in S-adenosyl-L-methionine binding. Residues Glu558 and 588 to 592 (WREPP) each bind substrate. Position 614–616 (614–616 (FEH)) interacts with S-adenosyl-L-methionine. The interval 663–704 (LSAAYRQSGRSHSSGSSSSSSSEAKDRDSGREQGPSREPHPT) is disordered. The short motif at 669–684 (QSGRSHSSGSSSSSSS) is the Nuclear localization signal element. Positions 670-684 (SGRSHSSGSSSSSSS) are enriched in low complexity. The span at 685 to 704 (EAKDRDSGREQGPSREPHPT) shows a compositional bias: basic and acidic residues.

The protein belongs to the CAPAM family. As to quaternary structure, interacts with POLR2A; interacts with the phosphorylated C-terminal domain (CTD) of POLR2A. In terms of tissue distribution, ubiquitous.

It localises to the nucleus. The enzyme catalyses a 5'-end (N(7)-methyl 5'-triphosphoguanosine)-(2'-O-methyladenosine) in mRNA + S-adenosyl-L-methionine = a 5'-end (N(7)-methyl 5'-triphosphoguanosine)-(N(6),2'-O-dimethyladenosine) in mRNA + S-adenosyl-L-homocysteine + H(+). Cap-specific adenosine methyltransferase activity is inhibited by zinc. Its function is as follows. Cap-specific adenosine methyltransferase that catalyzes formation of N(6),2'-O-dimethyladenosine cap (m6A(m)) by methylating the adenosine at the second transcribed position of capped mRNAs. Recruited to the early elongation complex of RNA polymerase II (RNAPII) via interaction with POLR2A and mediates formation of m6A(m) co-transcriptionally. This chain is mRNA (2'-O-methyladenosine-N(6)-)-methyltransferase, found in Homo sapiens (Human).